Consider the following 500-residue polypeptide: Probable cytosol aminopeptidase (500 aa).

Mn(2+)-binding residues include K264 and D269. Residue K276 is part of the active site. D287, D346, and E348 together coordinate Mn(2+). Residue R350 is part of the active site.

This sequence belongs to the peptidase M17 family. Requires Mn(2+) as cofactor.

The protein resides in the cytoplasm. The catalysed reaction is Release of an N-terminal amino acid, Xaa-|-Yaa-, in which Xaa is preferably Leu, but may be other amino acids including Pro although not Arg or Lys, and Yaa may be Pro. Amino acid amides and methyl esters are also readily hydrolyzed, but rates on arylamides are exceedingly low.. It carries out the reaction Release of an N-terminal amino acid, preferentially leucine, but not glutamic or aspartic acids.. Its function is as follows. Presumably involved in the processing and regular turnover of intracellular proteins. Catalyzes the removal of unsubstituted N-terminal amino acids from various peptides. The chain is Probable cytosol aminopeptidase from Nitrobacter hamburgensis (strain DSM 10229 / NCIMB 13809 / X14).